The chain runs to 452 residues: General transcription and DNA repair factor IIH subunit TFB2 (452 aa).

It belongs to the TFB2 family. In terms of assembly, component of the 7-subunit TFIIH core complex composed of XPB, XPD, TFB1/GTF2H1, GTF2H2/P44, TFB4/GTF2H3, TFB2/GTF2H4 and TFB5/GTF2H5, which is active in NER. The core complex associates with the 3-subunit CDK-activating kinase (CAK) module composed of CYCH1/cyclin H1, CDKD and MAT1/At4g30820 to form the 10-subunit holoenzyme (holo-TFIIH) active in transcription.

The protein localises to the nucleus. Component of the general transcription and DNA repair factor IIH (TFIIH) core complex, which is involved in general and transcription-coupled nucleotide excision repair (NER) of damaged DNA and, when complexed to CAK, in RNA transcription by RNA polymerase II. In NER, TFIIH acts by opening DNA around the lesion to allow the excision of the damaged oligonucleotide and its replacement by a new DNA fragment. In transcription, TFIIH has an essential role in transcription initiation. When the pre-initiation complex (PIC) has been established, TFIIH is required for promoter opening and promoter escape. Phosphorylation of the C-terminal tail (CTD) of the largest subunit of RNA polymerase II by the kinase module CAK controls the initiation of transcription. This is General transcription and DNA repair factor IIH subunit TFB2 from Arabidopsis thaliana (Mouse-ear cress).